The chain runs to 76 residues: Exodeoxyribonuclease 7 small subunit (76 aa).

It belongs to the XseB family. As to quaternary structure, heterooligomer composed of large and small subunits.

It is found in the cytoplasm. The enzyme catalyses Exonucleolytic cleavage in either 5'- to 3'- or 3'- to 5'-direction to yield nucleoside 5'-phosphates.. Bidirectionally degrades single-stranded DNA into large acid-insoluble oligonucleotides, which are then degraded further into small acid-soluble oligonucleotides. The polypeptide is Exodeoxyribonuclease 7 small subunit (Geotalea daltonii (strain DSM 22248 / JCM 15807 / FRC-32) (Geobacter daltonii)).